We begin with the raw amino-acid sequence, 129 residues long: MGPRGLQLLAVLLALGLCAPAGAQKPSACQCSRIEASHRKNCGFPGISASECFNTGCCFDSRVPNVPWCFHPLPKQESEQCVMEVAARKNCGYPGISPQECASRNCCFSDTIRNVPWCFFPILNQDCHY.

Positions 1–23 (MGPRGLQLLAVLLALGLCAPAGA) are cleaved as a signal peptide. The residue at position 24 (Gln24) is a Pyrrolidone carboxylic acid. P-type domains are found at residues 29–73 (CQCS…FHPL) and 79–122 (EQCV…FFPI). 7 cysteine pairs are disulfide-bonded: Cys29/Cys127, Cys31/Cys58, Cys42/Cys57, Cys52/Cys69, Cys81/Cys107, Cys91/Cys106, and Cys101/Cys118.

It localises to the secreted. In terms of biological role, inhibits gastrointestinal motility and gastric acid secretion. Could function as a structural component of gastric mucus, possibly by stabilizing glycoproteins in the mucus gel through interactions with carbohydrate side chains. This is Trefoil factor 2 (TFF2) from Canis lupus familiaris (Dog).